We begin with the raw amino-acid sequence, 134 residues long: Small ribosomal subunit protein uS8c (134 aa).

This sequence belongs to the universal ribosomal protein uS8 family. As to quaternary structure, part of the 30S ribosomal subunit.

The protein resides in the plastid. It localises to the chloroplast. One of the primary rRNA binding proteins, it binds directly to 16S rRNA central domain where it helps coordinate assembly of the platform of the 30S subunit. This is Small ribosomal subunit protein uS8c (rps8) from Bigelowiella natans (Pedinomonas minutissima).